A 143-amino-acid polypeptide reads, in one-letter code: Deoxyuridine 5'-triphosphate nucleotidohydrolase (143 aa).

S65, V78, R132, and G138 together coordinate dUMP.

The protein belongs to the dUTPase family. As to quaternary structure, homotrimer. Mg(2+) serves as cofactor.

The catalysed reaction is dUTP + H2O = dUMP + diphosphate + H(+). The protein operates within pyrimidine metabolism; dUMP biosynthesis; dUMP from dCTP (dUTP route): step 2/2. Involved in nucleotide metabolism via production of dUMP, the immediate precursor of thymidine nucleotides, and decreases the intracellular concentration of dUTP so that uracil cannot be incorporated into DNA. The chain is Deoxyuridine 5'-triphosphate nucleotidohydrolase (DUT1) from Antonospora locustae (Microsporidian parasite).